Consider the following 196-residue polypeptide: Nucleoid occlusion factor SlmA (196 aa).

The 62-residue stretch at 7 to 68 (SNRREEILQA…GLIEFIEEAL (62 aa)) folds into the HTH tetR-type domain. The H-T-H motif DNA-binding region spans 31-50 (TTVKLAKQVGVSEAALYRHF). Positions 65–142 (EEALMSRINR…QLRQILRERK (78 aa)) form a coiled coil.

Belongs to the nucleoid occlusion factor SlmA family. As to quaternary structure, homodimer. Interacts with FtsZ.

Its subcellular location is the cytoplasm. It localises to the nucleoid. Functionally, required for nucleoid occlusion (NO) phenomenon, which prevents Z-ring formation and cell division over the nucleoid. Acts as a DNA-associated cell division inhibitor that binds simultaneously chromosomal DNA and FtsZ, and disrupts the assembly of FtsZ polymers. SlmA-DNA-binding sequences (SBS) are dispersed on non-Ter regions of the chromosome, preventing FtsZ polymerization at these regions. In Vibrio atlanticus (strain LGP32) (Vibrio splendidus (strain Mel32)), this protein is Nucleoid occlusion factor SlmA.